The chain runs to 173 residues: Ribosome maturation factor RimM (173 aa).

Positions Pro-96–Leu-169 constitute a PRC barrel domain.

It belongs to the RimM family. In terms of assembly, binds ribosomal protein uS19.

The protein localises to the cytoplasm. In terms of biological role, an accessory protein needed during the final step in the assembly of 30S ribosomal subunit, possibly for assembly of the head region. Essential for efficient processing of 16S rRNA. May be needed both before and after RbfA during the maturation of 16S rRNA. It has affinity for free ribosomal 30S subunits but not for 70S ribosomes. This Mycolicibacterium gilvum (strain PYR-GCK) (Mycobacterium gilvum (strain PYR-GCK)) protein is Ribosome maturation factor RimM.